The chain runs to 148 residues: Snaclec B3/B5 (148 aa).

The signal sequence occupies residues Met-1–Ala-24. Cystine bridges form between Cys-27-Cys-38, Cys-55-Cys-144, and Cys-121-Cys-136. The C-type lectin domain occupies Tyr-34 to Lys-145.

This sequence belongs to the snaclec family. In terms of assembly, heterodimer; disulfide-linked. Expressed by the venom gland.

The protein localises to the secreted. Functionally, interferes with one step of hemostasis (modulation of platelet aggregation, or coagulation cascade, for example). This is Snaclec B3/B5 from Macrovipera lebetinus (Levantine viper).